Consider the following 984-residue polypeptide: Calsyntenin-1 (984 aa).

A signal peptide spans 1 to 18 (MRTAYFIFVGALLGVSYA). The Extracellular segment spans residues 19-850 (KHHHAARAPI…VGQGAIAGGA (832 aa)). Cadherin domains follow at residues 66 to 142 (YLLT…APEI) and 143 to 257 (ENPW…APGV). 2 N-linked (GlcNAc...) asparagine glycosylation sites follow: Asn206 and Asn305. The helical transmembrane segment at 851-871 (VAVVVVVCVGFLLVLLVIGVL) threads the bilayer. Over 872–984 (KMRDTPMPRR…ISTNARSYRV (113 aa)) the chain is Cytoplasmic. The segment at 878-959 (MPRRRRQKRQ…QTEVLPHLDA (82 aa)) is disordered. The span at 886–896 (RQSDGGMHWDD) shows a compositional bias: basic and acidic residues. Residues 918-951 (EFSDEEEEEETDGESECSYRDEEDDVSEDEEDQT) show a composition bias toward acidic residues.

It belongs to the calsyntenin family. As to quaternary structure, interacts with isoform c of daf-2 (daf-2c); promoting daf-2c localization to synaptic regions. Interacts with klc-2. Interacts with unc-104. Post-translationally, a proportion of the protein is proteolytically cleaved before the transmembrane domain in neurons, leading to release in the extracellular space. As to expression, widely expressed in the nervous system. Highly expressed in many head neurons, including most amphid sensory neurons. Also expressed in other tissues, such as intestine and gonadal sheath cells.

Its subcellular location is the golgi apparatus membrane. It localises to the perikaryon. The protein resides in the cell projection. The protein localises to the axon. It is found in the secreted. Its subcellular location is the synaptic cleft. Cell adhesion molecule involved in associative learning and memory. Acts as a regulator of GABAergic synaptic transmission at neuromuscular junctions by regulating GABA synaptic vesicle precursor transport: possibly functions as a cargo adapter for unc-104-mediated transport of synaptic vesicle precursors. Promotes localization of isoform c of daf-2 (daf-2c) to synaptic regions by acting as a signaling adapter between klc-2 and daf-2c. In terms of biological role, acts as aregulator of glutamate signaling in the sensory neurons by inhibiting the activity of command interneurons, thereby negatively regulating motor circuit activity and locomotion. The sequence is that of Calsyntenin-1 from Caenorhabditis elegans.